The following is a 353-amino-acid chain: D-alanine--D-alanine ligase A (353 aa).

The region spanning 141–346 (KRLVNEAGLS…YPEIINRLVA (206 aa)) is the ATP-grasp domain. 169-224 (EQALGLPIFIKPARQGSSVGVHKVVTEADYQAAMSDGFIYDDKLLAEEFIQAREVE) serves as a coordination point for ATP. The Mg(2+) site is built by aspartate 300, glutamate 313, and asparagine 315.

Belongs to the D-alanine--D-alanine ligase family. The cofactor is Mg(2+). Requires Mn(2+) as cofactor.

It is found in the cytoplasm. The enzyme catalyses 2 D-alanine + ATP = D-alanyl-D-alanine + ADP + phosphate + H(+). It participates in cell wall biogenesis; peptidoglycan biosynthesis. Its function is as follows. Cell wall formation. In Brucella melitensis biotype 1 (strain ATCC 23456 / CCUG 17765 / NCTC 10094 / 16M), this protein is D-alanine--D-alanine ligase A.